The following is an 878-amino-acid chain: Alanine--tRNA ligase (878 aa).

Residues H567, H571, C668, and H672 each coordinate Zn(2+).

It belongs to the class-II aminoacyl-tRNA synthetase family. The cofactor is Zn(2+).

It is found in the cytoplasm. It carries out the reaction tRNA(Ala) + L-alanine + ATP = L-alanyl-tRNA(Ala) + AMP + diphosphate. In terms of biological role, catalyzes the attachment of alanine to tRNA(Ala) in a two-step reaction: alanine is first activated by ATP to form Ala-AMP and then transferred to the acceptor end of tRNA(Ala). Also edits incorrectly charged Ser-tRNA(Ala) and Gly-tRNA(Ala) via its editing domain. The sequence is that of Alanine--tRNA ligase from Magnetococcus marinus (strain ATCC BAA-1437 / JCM 17883 / MC-1).